The chain runs to 294 residues: Homoserine kinase (294 aa).

84–94 contributes to the ATP binding site; sequence PFSRGLGSSSA.

Belongs to the GHMP kinase family. Homoserine kinase subfamily.

The protein resides in the cytoplasm. It carries out the reaction L-homoserine + ATP = O-phospho-L-homoserine + ADP + H(+). Its pathway is amino-acid biosynthesis; L-threonine biosynthesis; L-threonine from L-aspartate: step 4/5. In terms of biological role, catalyzes the ATP-dependent phosphorylation of L-homoserine to L-homoserine phosphate. This chain is Homoserine kinase, found in Campylobacter concisus (strain 13826).